A 197-amino-acid polypeptide reads, in one-letter code: Ribonuclease HII (197 aa).

The 189-residue stretch at Glu9 to Phe197 folds into the RNase H type-2 domain. Asp15, Glu16, and Asp107 together coordinate a divalent metal cation.

It belongs to the RNase HII family. Mn(2+) is required as a cofactor. The cofactor is Mg(2+).

The protein localises to the cytoplasm. The enzyme catalyses Endonucleolytic cleavage to 5'-phosphomonoester.. In terms of biological role, endonuclease that specifically degrades the RNA of RNA-DNA hybrids. In Haemophilus influenzae (strain PittGG), this protein is Ribonuclease HII.